The chain runs to 229 residues: Cytochrome c oxidase subunit 2 (229 aa).

The Mitochondrial intermembrane segment spans residues 1 to 26 (MATWSNLGLQDSASPLMEQLNFFHDH). A helical membrane pass occupies residues 27 to 48 (TLLILIMITILVGYLMLMLFFN). Topologically, residues 49-62 (KFTNRFLLHGQTIE) are mitochondrial matrix. A helical membrane pass occupies residues 63 to 82 (IIWTILPAIVLMFIALPSLR). Topologically, residues 83 to 229 (ILYLLDEINS…IKWITAMNSN (147 aa)) are mitochondrial intermembrane. Residues His161, Cys196, Glu198, Cys200, His204, and Met207 each contribute to the Cu cation site. Position 198 (Glu198) interacts with Mg(2+).

The protein belongs to the cytochrome c oxidase subunit 2 family. In terms of assembly, component of the cytochrome c oxidase (complex IV, CIV), a multisubunit enzyme composed of a catalytic core of 3 subunits and several supernumerary subunits. The complex exists as a monomer or a dimer and forms supercomplexes (SCs) in the inner mitochondrial membrane with ubiquinol-cytochrome c oxidoreductase (cytochrome b-c1 complex, complex III, CIII). The cofactor is Cu cation.

It is found in the mitochondrion inner membrane. It carries out the reaction 4 Fe(II)-[cytochrome c] + O2 + 8 H(+)(in) = 4 Fe(III)-[cytochrome c] + 2 H2O + 4 H(+)(out). Its function is as follows. Component of the cytochrome c oxidase, the last enzyme in the mitochondrial electron transport chain which drives oxidative phosphorylation. The respiratory chain contains 3 multisubunit complexes succinate dehydrogenase (complex II, CII), ubiquinol-cytochrome c oxidoreductase (cytochrome b-c1 complex, complex III, CIII) and cytochrome c oxidase (complex IV, CIV), that cooperate to transfer electrons derived from NADH and succinate to molecular oxygen, creating an electrochemical gradient over the inner membrane that drives transmembrane transport and the ATP synthase. Cytochrome c oxidase is the component of the respiratory chain that catalyzes the reduction of oxygen to water. Electrons originating from reduced cytochrome c in the intermembrane space (IMS) are transferred via the dinuclear copper A center (CU(A)) of subunit 2 and heme A of subunit 1 to the active site in subunit 1, a binuclear center (BNC) formed by heme A3 and copper B (CU(B)). The BNC reduces molecular oxygen to 2 water molecules using 4 electrons from cytochrome c in the IMS and 4 protons from the mitochondrial matrix. This chain is Cytochrome c oxidase subunit 2 (COII), found in Simulium vittatum (Striped black fly).